Here is a 43-residue protein sequence, read N- to C-terminus: Protein PsbN (43 aa).

The helical transmembrane segment at 7–27 (FVVGILVALVLITAFAVYTAF) threads the bilayer.

This sequence belongs to the PsbN family.

Its subcellular location is the cell inner membrane. Its function is as follows. May play a role in photosystem I and II biogenesis. This Gloeobacter violaceus (strain ATCC 29082 / PCC 7421) protein is Protein PsbN.